A 1373-amino-acid polypeptide reads, in one-letter code: Poly(A) RNA polymerase gld-2 homolog B (1373 aa).

Residues 75–91 (NSCHSSNSSSNTSNNNN) are compositionally biased toward low complexity. Disordered regions lie at residues 75-155 (NSCH…QEKQ), 175-340 (SDCK…FWKT), 425-543 (PDST…QQQK), 734-770 (PQQQ…FADG), 802-866 (CGSG…ALGS), and 880-928 (HPLH…PTPV). Over residues 96–112 (GQQQQPLHYCNSNNSHS) the composition is skewed to polar residues. Composition is skewed to low complexity over residues 130–152 (QQQQ…QMQQ), 180–219 (SDSN…SCSN), 228–251 (NENS…NTSS), and 274–284 (ESGSSEGAAES). 2 stretches are compositionally biased toward polar residues: residues 295–340 (CNSN…FWKT) and 430–442 (KSSS…NMIR). Residues 443–485 (SSSNGNSNFSRHQYGHQSTGSGYQQQQQRYRNAQNVYQQYQHQ) are compositionally biased toward low complexity. Residues 486 to 502 (QQHHAQQHTHPHFRRKH) are compositionally biased toward basic residues. Low complexity-rich tracts occupy residues 735–753 (QQQQ…GTSS) and 819–844 (AGAL…SGTS). The span at 855–866 (PSISPTPSALGS) shows a compositional bias: polar residues. Low complexity predominate over residues 880 to 890 (HPLHQQHPPSH). The tract at residues 945–1373 (RYLAQARNIE…FAETTAAHVA (429 aa)) is sufficent for interaction with Dcr-2. Mg(2+) contacts are provided by D1029 and D1031. The PAP-associated domain occupies 1211 to 1272 (TLGEHLLGFF…NIEEPFDLSN (62 aa)). A compositionally biased stretch (low complexity) spans 1320–1341 (LQQHQQQFEQQLHHPISGQQRS). Positions 1320 to 1359 (LQQHQQQFEQQLHHPISGQQRSAGGGGDGANPVPSTLNPD) are disordered.

Belongs to the DNA polymerase type-B-like family. GLD2 subfamily. Interacts with orb, an RNA-binding protein, generating an ovarian cytoplasmic polyadenylation complex. Interacts (via C-terminus) with Dcr-2. The cofactor is Mg(2+). It depends on Mn(2+) as a cofactor. As to expression, expressed in ovaries. Not expressed in adult males.

The protein resides in the cytoplasm. It catalyses the reaction RNA(n) + ATP = RNA(n)-3'-adenine ribonucleotide + diphosphate. Cytoplasmic poly(A) RNA polymerase that adds successive AMP monomers to the 3'-end of specific maternal RNAs (bcd, Tl, and tor), forming a poly(A) tail, during late oogenesis and early embryogenesis. In contrast to the canonical nuclear poly(A) RNA polymerase, it only adds poly(A) to selected cytoplasmic mRNAs. Required for localization of mRNAs to both poles of the egg, to recruit or maintain known centrosomal proteins with two types of microtubule organizing centers (MTOCs): the central MTOC that forms between the meiosis II tandem spindles and the centrosomes of the mitotic spindle. Required at the final stage of oogenesis for meiosis I metaphase arrest and for progression beyond this stage. Functions with the RNA-binding protein Dcr-2 to promote cytoplasmic polyadenylation and translational activation of certain mRNAs such as Tl and r2d2. As a consequence, is involved in regulating Toll immune signaling and promoting resistance to fungal infection. This chain is Poly(A) RNA polymerase gld-2 homolog B (wisp), found in Drosophila melanogaster (Fruit fly).